Reading from the N-terminus, the 346-residue chain is Holliday junction branch migration complex subunit RuvB (346 aa).

Positions 1 to 181 (MSDRNPLIDA…FGIPVRLNFY (181 aa)) are large ATPase domain (RuvB-L). ATP contacts are provided by residues L20, R21, G62, K65, T66, T67, 128 to 130 (EDF), R171, Y181, and R218. Residue T66 coordinates Mg(2+). The segment at 182-252 (TVEELEYIVR…IADEALSRLE (71 aa)) is small ATPAse domain (RuvB-S). The interval 255–346 (NRGLDQLDRR…SQYGLFMEDE (92 aa)) is head domain (RuvB-H). DNA contacts are provided by R291, R310, and R315.

Belongs to the RuvB family. As to quaternary structure, homohexamer. Forms an RuvA(8)-RuvB(12)-Holliday junction (HJ) complex. HJ DNA is sandwiched between 2 RuvA tetramers; dsDNA enters through RuvA and exits via RuvB. An RuvB hexamer assembles on each DNA strand where it exits the tetramer. Each RuvB hexamer is contacted by two RuvA subunits (via domain III) on 2 adjacent RuvB subunits; this complex drives branch migration. In the full resolvosome a probable DNA-RuvA(4)-RuvB(12)-RuvC(2) complex forms which resolves the HJ.

It localises to the cytoplasm. It carries out the reaction ATP + H2O = ADP + phosphate + H(+). Its function is as follows. The RuvA-RuvB-RuvC complex processes Holliday junction (HJ) DNA during genetic recombination and DNA repair, while the RuvA-RuvB complex plays an important role in the rescue of blocked DNA replication forks via replication fork reversal (RFR). RuvA specifically binds to HJ cruciform DNA, conferring on it an open structure. The RuvB hexamer acts as an ATP-dependent pump, pulling dsDNA into and through the RuvAB complex. RuvB forms 2 homohexamers on either side of HJ DNA bound by 1 or 2 RuvA tetramers; 4 subunits per hexamer contact DNA at a time. Coordinated motions by a converter formed by DNA-disengaged RuvB subunits stimulates ATP hydrolysis and nucleotide exchange. Immobilization of the converter enables RuvB to convert the ATP-contained energy into a lever motion, pulling 2 nucleotides of DNA out of the RuvA tetramer per ATP hydrolyzed, thus driving DNA branch migration. The RuvB motors rotate together with the DNA substrate, which together with the progressing nucleotide cycle form the mechanistic basis for DNA recombination by continuous HJ branch migration. Branch migration allows RuvC to scan DNA until it finds its consensus sequence, where it cleaves and resolves cruciform DNA. The polypeptide is Holliday junction branch migration complex subunit RuvB (Brucella suis (strain ATCC 23445 / NCTC 10510)).